The sequence spans 98 residues: Large ribosomal subunit protein uL23 (98 aa).

This sequence belongs to the universal ribosomal protein uL23 family. Part of the 50S ribosomal subunit. Contacts protein L29, and trigger factor when it is bound to the ribosome.

Functionally, one of the early assembly proteins it binds 23S rRNA. One of the proteins that surrounds the polypeptide exit tunnel on the outside of the ribosome. Forms the main docking site for trigger factor binding to the ribosome. This Ruegeria sp. (strain TM1040) (Silicibacter sp.) protein is Large ribosomal subunit protein uL23.